Reading from the N-terminus, the 180-residue chain is Epididymal-specific lipocalin-6 (180 aa).

The first 20 residues, 1–20 (MGGLLLAALLALVAVPRAQA), serve as a signal peptide directing secretion. Residues C81 and C174 are joined by a disulfide bond.

Belongs to the calycin superfamily. Lipocalin family.

It is found in the secreted. Its function is as follows. May play a role in male fertility. This chain is Epididymal-specific lipocalin-6 (LCN6), found in Macaca mulatta (Rhesus macaque).